Consider the following 417-residue polypeptide: Actin-related protein 10 (417 aa).

The protein belongs to the actin family. Subunit of dynactin, a multiprotein complex part of a tripartite complex with dynein and a adapter, such as BICDL1, BICD2 or HOOK3. The dynactin complex is built around ACTR1A/ACTB filament and consists of an actin-related filament composed of a shoulder domain, a pointed end and a barbed end. Its length is defined by its flexible shoulder domain. The soulder is composed of 2 DCTN1 subunits, 4 DCTN2 and 2 DCTN3. The 4 DCNT2 (via N-terminus) bind the ACTR1A filament and act as molecular rulers to determine the length. The pointed end is important for binding dynein-dynactin cargo adapters. Consists of 4 subunits: ACTR10, DCNT4, DCTN5 and DCTN6. The barbed end is composed of a CAPZA1:CAPZB heterodimers, which binds ACTR1A/ACTB filament and dynactin and stabilizes dynactin.

Its subcellular location is the cytoplasm. The protein localises to the cytoskeleton. Functionally, part of the dynactin complex that activates the molecular motor dynein for ultra-processive transport along microtubules. The chain is Actin-related protein 10 (Actr10) from Mus musculus (Mouse).